Consider the following 602-residue polypeptide: NADH-quinone oxidoreductase subunit C/D (602 aa).

Residues 1-192 (MVNNMTDLTA…DPFELTKAKQ (192 aa)) are NADH dehydrogenase I subunit C. The interval 216–602 (DFMFLNLGPN…IDFVMSDVDR (387 aa)) is NADH dehydrogenase I subunit D.

In the N-terminal section; belongs to the complex I 30 kDa subunit family. This sequence in the C-terminal section; belongs to the complex I 49 kDa subunit family. As to quaternary structure, NDH-1 is composed of 13 different subunits. Subunits NuoB, CD, E, F, and G constitute the peripheral sector of the complex.

It localises to the cell inner membrane. It carries out the reaction a quinone + NADH + 5 H(+)(in) = a quinol + NAD(+) + 4 H(+)(out). Its function is as follows. NDH-1 shuttles electrons from NADH, via FMN and iron-sulfur (Fe-S) centers, to quinones in the respiratory chain. The immediate electron acceptor for the enzyme in this species is believed to be ubiquinone. Couples the redox reaction to proton translocation (for every two electrons transferred, four hydrogen ions are translocated across the cytoplasmic membrane), and thus conserves the redox energy in a proton gradient. This is NADH-quinone oxidoreductase subunit C/D from Klebsiella pneumoniae (strain 342).